Reading from the N-terminus, the 305-residue chain is Phosphoinositol dihydroceramide synthase (305 aa).

The signal sequence occupies residues 1 to 23; it reads MPSKKETLTVIVIMALFLLLTAA. Residue Cys-24 is the site of N-palmitoyl cysteine attachment. Cys-24 is lipidated: S-diacylglycerol cysteine. 6 helical membrane passes run 41–61, 117–137, 149–169, 216–236, 241–261, and 266–286; these read LFFAGLPTRKLAVALLPFAIF, VFAGIFYLCWVPVPILFGLCL, FALVFLFVNLIGFAGYYIHPA, FAAVPSLHAAYMVVALVYAII, WYVIALFSVIMAGIWGTAIYS, and IIDVLLGISCALLGWLFFEYG.

The protein localises to the membrane. It catalyses the reaction N-(2-hydroxy-fatty acyl)-dihydroceramide + a 1,2-diacyl-sn-glycero-3-phospho-(1D-myo-inositol) = inositol-1-phospho-N-(2-hydroxy-fatty acyl)-dihydroceramide + a 1,2-diacyl-sn-glycerol. Its function is as follows. Catalyzes the addition of a phosphorylinositol group onto dihydroceramide to form phosphoinositol dihydroceramide (PI-DHC), an essential step in sphingolipid biosynthesis. This chain is Phosphoinositol dihydroceramide synthase, found in Bacteroides thetaiotaomicron (strain ATCC 29148 / DSM 2079 / JCM 5827 / CCUG 10774 / NCTC 10582 / VPI-5482 / E50).